Here is a 1198-residue protein sequence, read N- to C-terminus: DNA polymerase II large subunit (1198 aa).

Disordered stretches follow at residues 281 to 332 (YKTG…PQKK) and 534 to 553 (HWAE…AAES). The span at 286–319 (DTDEADADSDDGTDEDAADDSDIDDSSAGDEEAD) shows a compositional bias: acidic residues.

The protein belongs to the archaeal DNA polymerase II family. Heterodimer of a large subunit and a small subunit.

The catalysed reaction is DNA(n) + a 2'-deoxyribonucleoside 5'-triphosphate = DNA(n+1) + diphosphate. The enzyme catalyses Exonucleolytic cleavage in the 3'- to 5'-direction to yield nucleoside 5'-phosphates.. Possesses two activities: a DNA synthesis (polymerase) and an exonucleolytic activity that degrades single-stranded DNA in the 3'- to 5'-direction. Has a template-primer preference which is characteristic of a replicative DNA polymerase. This Natronomonas pharaonis (strain ATCC 35678 / DSM 2160 / CIP 103997 / JCM 8858 / NBRC 14720 / NCIMB 2260 / Gabara) (Halobacterium pharaonis) protein is DNA polymerase II large subunit.